Here is a 241-residue protein sequence, read N- to C-terminus: MEADALSPVELGLLLLPFVVMLLAALCVRCRELPASYDSASTESLYPRSILIKPPQITVPRTPATSYPLVTSFPPLRQPDLLPIPRSPQPLGGSHRMPSSRQNSDDANSVASYENQEPARKNVDEDEDEDDYPEGYLVVLPDSSPAAVPVVSSAPVPSNPDLGDSAFSMESCEDYVNVPESEESAEASLDGSREYVNVSQDAQPVIRAELASVTSQEVEDEEEEDVDGEEAPDYENLQELN.

At 1–4 (MEAD) the chain is on the extracellular side. A helical; Signal-anchor for type III membrane protein membrane pass occupies residues 5–28 (ALSPVELGLLLLPFVVMLLAALCV). 2 S-palmitoyl cysteine lipidation sites follow: Cys27 and Cys30. The Cytoplasmic segment spans residues 29 to 241 (RCRELPASYD…PDYENLQELN (213 aa)). A phosphoserine mark is found at Ser41, Ser44, Ser87, Ser104, Ser109, and Ser112. The interval 78 to 139 (QPDLLPIPRS…DDYPEGYLVV (62 aa)) is disordered. Polar residues predominate over residues 97-115 (MPSSRQNSDDANSVASYEN). Positions 124 to 133 (DEDEDEDDYP) are enriched in acidic residues. The interaction with PLCG1 stretch occupies residues 136 to 139 (YLVV). Tyr175 carries the post-translational modification Phosphotyrosine. Interaction with GRB2, GRAP2 and PIK3R1 stretches follow at residues 175–178 (YVNV) and 195–198 (YVNV). 3 positions are modified to phosphoserine: Ser199, Ser212, and Ser215. The interval 209–241 (ELASVTSQEVEDEEEEDVDGEEAPDYENLQELN) is disordered. A compositionally biased stretch (acidic residues) spans 217–233 (EVEDEEEEDVDGEEAPD). A Phosphotyrosine modification is found at Tyr234.

As to quaternary structure, when phosphorylated, interacts directly with the PIK3R1 subunit of phosphoinositide 3-kinase and the SH2 domains of GRB2, GRAP, GRAP2, PLCG1 and PLCG2. Interacts indirectly with CBL, SOS, VAV, and LCP2. Interacts with SHB, SKAP2 and CLNK. Interacts with FCGR1A. Interacts with GRB2, PLCG1 and THEMIS upon TCR activation in thymocytes. Interacts with THEMIS2. Post-translationally, phosphorylated on tyrosines by ZAP70 upon TCR activation, or by SYK upon other immunoreceptor activation; which leads to the recruitment of multiple signaling molecules. Is one of the most prominently tyrosine-phosphorylated proteins detected following TCR engagement. May be dephosphorylated by PTPRJ. In terms of processing, palmitoylation of Cys-27 and Cys-30 is required for raft targeting and efficient phosphorylation. Phosphorylated on tyrosines by ZAP70 upon TCR activation, or by SYK upon other immunoreceptor activation; which leads to the recruitment of multiple signaling molecules. Is one of the most prominently tyrosine-phosphorylated proteins detected following TCR engagement. May be dephosphorylated by PTPRJ. Phosphorylated by ITK leading to the recruitment of VAV1 to LAT-containing complexes. Post-translationally, 'Lys-63'-linked ubiquitinated by TRAF6. As to expression, expressed in NK cells. Present in lymph node, spleen and thymus (at protein level).

It is found in the cell membrane. Its function is as follows. Required for TCR (T-cell antigen receptor)- and pre-TCR-mediated signaling, both in mature T-cells and during their development. Involved in FCGR3 (low affinity immunoglobulin gamma Fc region receptor III)-mediated signaling in natural killer cells and FCER1 (high affinity immunoglobulin epsilon receptor)-mediated signaling in mast cells. Couples activation of these receptors and their associated kinases with distal intracellular events such as mobilization of intracellular calcium stores, PKC activation, MAPK activation or cytoskeletal reorganization through the recruitment of PLCG1, GRB2, GRAP2, and other signaling molecules. This chain is Linker for activation of T-cells family member 1 (Lat), found in Rattus norvegicus (Rat).